The following is a 266-amino-acid chain: Apolipoprotein A-I (266 aa).

Residues 1–18 form the signal peptide; it reads MKAVVLTLAVLFLTGSQA. 2 repeat units span residues 67-88 and 89-110. The segment at 67–266 is 10 X approximate tandem repeats; it reads LKLLDNWDSL…EEASKKLNAQ (200 aa). Methionine sulfoxide is present on M109. The stretch at 111–121 is one 3; half-length repeat; that stretch reads KDVEEMKTKVQ. 5 consecutive repeat copies span residues 122-143, 144-165, 166-187, 188-209, and 210-231. Residues 232–242 form a 9; half-length repeat; the sequence is PALEDLRQGLL. Repeat 10 spans residues 243–266; that stretch reads PVLESFKVSLLSALEEASKKLNAQ.

This sequence belongs to the apolipoprotein A1/A4/E family. In terms of assembly, homodimer. Interacts with APOA1BP and CLU. Component of a sperm activating protein complex (SPAP), consisting of APOA1, an immunoglobulin heavy chain, an immunoglobulin light chain and albumin. Interacts with NDRG1. Interacts with SCGB3A2. Interacts with NAXE and YJEFN3. In terms of processing, glycosylated. Palmitoylated. Post-translationally, phosphorylation sites are present in the extracellular medium. As to expression, major protein of plasma HDL, also found in chylomicrons.

It localises to the secreted. Participates in the reverse transport of cholesterol from tissues to the liver for excretion by promoting cholesterol efflux from tissues and by acting as a cofactor for the lecithin cholesterol acyltransferase (LCAT). As part of the SPAP complex, activates spermatozoa motility. This chain is Apolipoprotein A-I (APOA1), found in Carlito syrichta (Philippine tarsier).